The following is a 138-amino-acid chain: Low molecular weight protein-tyrosine-phosphatase PtpB (138 aa).

The Nucleophile role is filled by Cys-7. Arg-13 is an active-site residue. Asp-111 acts as the Proton donor in catalysis.

It belongs to the low molecular weight phosphotyrosine protein phosphatase family.

The catalysed reaction is O-phospho-L-tyrosyl-[protein] + H2O = L-tyrosyl-[protein] + phosphate. In terms of biological role, dephosphorylates the phosphotyrosine-containing proteins. This Staphylococcus haemolyticus (strain JCSC1435) protein is Low molecular weight protein-tyrosine-phosphatase PtpB (ptpB).